Reading from the N-terminus, the 141-residue chain is Nucleoside diphosphate kinase (141 aa).

6 residues coordinate ATP: K11, F59, R87, T93, R104, and N114. Catalysis depends on H117, which acts as the Pros-phosphohistidine intermediate.

Belongs to the NDK family. Homotetramer. Requires Mg(2+) as cofactor.

It localises to the cytoplasm. The catalysed reaction is a 2'-deoxyribonucleoside 5'-diphosphate + ATP = a 2'-deoxyribonucleoside 5'-triphosphate + ADP. It carries out the reaction a ribonucleoside 5'-diphosphate + ATP = a ribonucleoside 5'-triphosphate + ADP. Its function is as follows. Major role in the synthesis of nucleoside triphosphates other than ATP. The ATP gamma phosphate is transferred to the NDP beta phosphate via a ping-pong mechanism, using a phosphorylated active-site intermediate. The protein is Nucleoside diphosphate kinase of Cellvibrio japonicus (strain Ueda107) (Pseudomonas fluorescens subsp. cellulosa).